The following is a 170-amino-acid chain: Cathelicidin antimicrobial peptide (170 aa).

An N-terminal signal peptide occupies residues 1 to 30 (MKTQRDGHSLGGWSLMLLLLGLLMPLAIVA). Residues 31–131 (QVLSYKEAVL…DISCDKDNRR (101 aa)) constitute a propeptide, cathelin-like domain (CLD). 2 disulfide bridges follow: Cys86-Cys97 and Cys108-Cys125. Residues 150-162 (FKRIVQRIKDFLQ) are active core.

The protein belongs to the cathelicidin family. In terms of assembly, monomer, homodimer or homotrimer (in vitro). Oligomerizes as tetra- or hexamer in solution (in vitro). Post-translationally, proteolytically cleaved by proteinase PRTN3 into antibacterial peptide LL-37. Proteolytically cleaved by cathepsin CTSG and neutrophil elastase ELANE. In terms of processing, resistant to proteolytic degradation in solution, and when bound to both zwitterionic (mimicking mammalian membranes) and negatively charged membranes (mimicking bacterial membranes). After secretion onto the skin surface, the CAMP gene product is processed by a serine protease-dependent mechanism into multiple novel antimicrobial peptides distinct from and shorter than cathelicidin LL-37. These peptides show enhanced antimicrobial action, acquiring the ability to kill skin pathogens such as S.aureus, E.coli and C.albicans. These peptides have lost the ability to stimulate CXCL8/IL8 release from keratinocytes. The peptides act synergistically, killing bacteria at lower concentrations when present together, and maintain activity at increased salt condition.

It localises to the secreted. It is found in the vesicle. Antimicrobial protein that is an integral component of the innate immune system. Binds to bacterial lipopolysaccharides (LPS). Acts via neutrophil N-formyl peptide receptors to enhance the release of CXCL2. Postsecretory processing generates multiple cathelicidin antimicrobial peptides with various lengths which act as a topical antimicrobial defense in sweat on skin. The unprocessed precursor form, cathelicidin antimicrobial peptide, inhibits the growth of Gram-negative E.coli and E.aerogenes with efficiencies comparable to that of the mature peptide LL-37 (in vitro). Functionally, antimicrobial peptide that is an integral component of the innate immune system. Binds to bacterial lipopolysaccharides (LPS). Causes membrane permeabilization by forming transmembrane pores (in vitro). Causes lysis of E.coli. Exhibits antimicrobial activity against Gram-negative bacteria such as P.aeruginosa, S.typhimurium, E.aerogenes, E.coli and P.syringae, Gram-positive bacteria such as L.monocytogenes, S.epidermidis, S.pyogenes and S.aureus, as well as vancomycin-resistant enterococci (in vitro). Exhibits antimicrobial activity against methicillin-resistant S.aureus, P.mirabilis, and C.albicans in low-salt media, but not in media containing 100 mM NaCl (in vitro). Forms chiral supramolecular assemblies with quinolone signal (PQS) molecules of P.aeruginosa, which may lead to interference of bacterial quorum signaling and perturbance of bacterial biofilm formation. May form supramolecular fiber-like assemblies on bacterial membranes. Induces cytokine and chemokine producation as well as TNF/TNFA and CSF2/GMCSF production in normal human keratinocytes. Exhibits hemolytic activity against red blood cells. In terms of biological role, exhibits antimicrobial activity against E.coli and B.megaterium (in vitro). The chain is Cathelicidin antimicrobial peptide from Hylobates moloch (Silvery gibbon).